A 60-amino-acid polypeptide reads, in one-letter code: Large ribosomal subunit protein uL30 (60 aa).

Belongs to the universal ribosomal protein uL30 family. As to quaternary structure, part of the 50S ribosomal subunit.

The polypeptide is Large ribosomal subunit protein uL30 (Verminephrobacter eiseniae (strain EF01-2)).